The primary structure comprises 268 residues: Phosphoethanolamine/phosphocholine phosphatase (268 aa).

The active-site Nucleophile is the Asp32. Mg(2+) is bound by residues Asp32 and Asp34. Residue Asp34 is the Proton donor of the active site. Asp43 and Asp123 together coordinate substrate. Residue Asp203 coordinates Mg(2+).

The protein belongs to the HAD-like hydrolase superfamily. PHOSPHO family. Mg(2+) serves as cofactor. In terms of tissue distribution, expressed at sites of mineralization in bone and cartilage. Highly expressed in hypertrophic chondrocytes compared to non-chondrogenic tissues. Expressed in chondrocytes but not in heart, liver, lung, kidney, spleen, muscle, adipose tissues not duodenum. In diaphyseal cortical bone, it is expressed in the osteoid layer of the periosteum, forming surfaces of growing osteons, and newly formed osteocytes, whereas it is not expressed in the endosteum and closed osteons. In growth plate cartilage, it is limited to the early hypertrophic chondrocytes and the ossification groove of Ranvier. Highly expressed on the mineralization surfaces of the cartilage remnants and trabecular bone within the primary spongiosa. Expressed in 17-day-old embryonic calvaria, the osteoid present on the intramembranous and periosteal bone surfaces but not in soft tissues examined.

Its subcellular location is the extracellular vesicle. It catalyses the reaction phosphoethanolamine + H2O = ethanolamine + phosphate. The enzyme catalyses phosphocholine + H2O = choline + phosphate. In terms of biological role, phosphatase that has a high activity toward phosphoethanolamine (PEA) and phosphocholine (PCho). Involved in the generation of inorganic phosphate for bone mineralization. This Gallus gallus (Chicken) protein is Phosphoethanolamine/phosphocholine phosphatase (PHOSPHO1).